The primary structure comprises 466 residues: Asparagine--tRNA ligase (466 aa).

This sequence belongs to the class-II aminoacyl-tRNA synthetase family. Homodimer.

Its subcellular location is the cytoplasm. It catalyses the reaction tRNA(Asn) + L-asparagine + ATP = L-asparaginyl-tRNA(Asn) + AMP + diphosphate + H(+). The sequence is that of Asparagine--tRNA ligase from Yersinia enterocolitica serotype O:8 / biotype 1B (strain NCTC 13174 / 8081).